Consider the following 94-residue polypeptide: Co-chaperonin GroES (94 aa).

The protein belongs to the GroES chaperonin family. As to quaternary structure, heptamer of 7 subunits arranged in a ring. Interacts with the chaperonin GroEL.

The protein resides in the cytoplasm. In terms of biological role, together with the chaperonin GroEL, plays an essential role in assisting protein folding. The GroEL-GroES system forms a nano-cage that allows encapsulation of the non-native substrate proteins and provides a physical environment optimized to promote and accelerate protein folding. GroES binds to the apical surface of the GroEL ring, thereby capping the opening of the GroEL channel. The polypeptide is Co-chaperonin GroES (Listeria welshimeri serovar 6b (strain ATCC 35897 / DSM 20650 / CCUG 15529 / CIP 8149 / NCTC 11857 / SLCC 5334 / V8)).